The chain runs to 144 residues: D-aminoacyl-tRNA deacylase (144 aa).

Positions 136 to 137 (GP) match the Gly-cisPro motif, important for rejection of L-amino acids motif.

It belongs to the DTD family. Homodimer.

The protein localises to the cytoplasm. It carries out the reaction glycyl-tRNA(Ala) + H2O = tRNA(Ala) + glycine + H(+). It catalyses the reaction a D-aminoacyl-tRNA + H2O = a tRNA + a D-alpha-amino acid + H(+). An aminoacyl-tRNA editing enzyme that deacylates mischarged D-aminoacyl-tRNAs. Also deacylates mischarged glycyl-tRNA(Ala), protecting cells against glycine mischarging by AlaRS. Acts via tRNA-based rather than protein-based catalysis; rejects L-amino acids rather than detecting D-amino acids in the active site. By recycling D-aminoacyl-tRNA to D-amino acids and free tRNA molecules, this enzyme counteracts the toxicity associated with the formation of D-aminoacyl-tRNA entities in vivo and helps enforce protein L-homochirality. The chain is D-aminoacyl-tRNA deacylase from Vibrio cholerae serotype O1 (strain ATCC 39541 / Classical Ogawa 395 / O395).